The following is a 264-amino-acid chain: Tritrans,polycis-undecaprenyl-diphosphate synthase (geranylgeranyl-diphosphate specific) (264 aa).

Residue D43 is part of the active site. D43 contributes to the Mg(2+) binding site. Residues 44–47, W48, H60, and 88–90 each bind substrate; these read GNRR and STE. Residue N91 is the Proton acceptor of the active site. Substrate-binding positions include F92, R94, R213, and 219-221; that span reads RIS. Mg(2+) is bound at residue E232.

Belongs to the UPP synthase family. In terms of assembly, homodimer. Requires Mg(2+) as cofactor.

The enzyme catalyses geranylgeranyl diphosphate + 7 isopentenyl diphosphate = tri-trans,hepta-cis-undecaprenyl diphosphate + 7 diphosphate. Functionally, catalyzes the sequential condensation of isopentenyl diphosphate (IPP) with geranylgeranyl diphosphate (GGPP) to yield (2Z,6Z,10Z,14Z,18Z,22Z,26Z,30E,34E,38E)-undecaprenyl diphosphate (tritrans,heptacis-UPP). It is probably the precursor of glycosyl carrier lipids. This is Tritrans,polycis-undecaprenyl-diphosphate synthase (geranylgeranyl-diphosphate specific) from Thermococcus kodakarensis (strain ATCC BAA-918 / JCM 12380 / KOD1) (Pyrococcus kodakaraensis (strain KOD1)).